The chain runs to 113 residues: N-alpha-acetyltransferase 38-A, NatC auxiliary subunit (113 aa).

The tract at residues 1 to 29 is disordered; it reads MAAVLEENGCSRQSSPSAGDSDAEPGDTA. Residues 28–106 form the Sm domain; it reads TARHKLESLL…IVSIQVELES (79 aa).

It belongs to the snRNP Sm proteins family. Component of the N-terminal acetyltransferase C (NatC) complex, which is composed of naa35, naa38 and naa30.

The protein resides in the cytoplasm. In terms of biological role, auxillary component of the N-terminal acetyltransferase C (NatC) complex which catalyzes acetylation of N-terminal methionine residues. The polypeptide is N-alpha-acetyltransferase 38-A, NatC auxiliary subunit (naa38-a) (Xenopus laevis (African clawed frog)).